Here is an 862-residue protein sequence, read N- to C-terminus: Alpha,alpha-trehalose-phosphate synthase [UDP-forming] 5 (862 aa).

Serine 5 is modified (phosphoserine). Residue threonine 32 is modified to Phosphothreonine. The segment at 60–546 (DRIIIVGNQL…ARSFIQDLER (487 aa)) is glycosyltransferase.

In the N-terminal section; belongs to the glycosyltransferase 20 family. The protein in the C-terminal section; belongs to the trehalose phosphatase family. Binds to the phosphopeptide-binding site of GRF/14-3-3 and to MBF1c. In terms of processing, both Ser-5 and Thr-32 must be phosphorylated for binding to GRF/14-3-3. Low expression in leaves, stems, flower buds, flowers and siliques.

The enzyme catalyses D-glucose 6-phosphate + UDP-alpha-D-glucose = alpha,alpha-trehalose 6-phosphate + UDP + H(+). The polypeptide is Alpha,alpha-trehalose-phosphate synthase [UDP-forming] 5 (TPS5) (Arabidopsis thaliana (Mouse-ear cress)).